The following is a 350-amino-acid chain: Uroporphyrinogen decarboxylase (350 aa).

Residues 28-32, D78, Y155, S210, and H325 each bind substrate; that span reads RQAGR.

The protein belongs to the uroporphyrinogen decarboxylase family. Homodimer.

It is found in the cytoplasm. It carries out the reaction uroporphyrinogen III + 4 H(+) = coproporphyrinogen III + 4 CO2. The protein operates within porphyrin-containing compound metabolism; protoporphyrin-IX biosynthesis; coproporphyrinogen-III from 5-aminolevulinate: step 4/4. In terms of biological role, catalyzes the decarboxylation of four acetate groups of uroporphyrinogen-III to yield coproporphyrinogen-III. In Microcystis aeruginosa (strain NIES-843 / IAM M-2473), this protein is Uroporphyrinogen decarboxylase.